We begin with the raw amino-acid sequence, 393 residues long: Succinate--CoA ligase [ADP-forming] subunit beta (393 aa).

One can recognise an ATP-grasp domain in the interval 9–242 (KELFAKHGVP…RAATDPLEWK (234 aa)). ATP-binding positions include K45, 52-54 (GRG), S94, and E99. Mg(2+)-binding residues include N191 and D211. Residues N262 and 324-326 (GIT) contribute to the substrate site.

The protein belongs to the succinate/malate CoA ligase beta subunit family. As to quaternary structure, heterotetramer of two alpha and two beta subunits. Mg(2+) is required as a cofactor.

The catalysed reaction is succinate + ATP + CoA = succinyl-CoA + ADP + phosphate. The enzyme catalyses GTP + succinate + CoA = succinyl-CoA + GDP + phosphate. It participates in carbohydrate metabolism; tricarboxylic acid cycle; succinate from succinyl-CoA (ligase route): step 1/1. Succinyl-CoA synthetase functions in the citric acid cycle (TCA), coupling the hydrolysis of succinyl-CoA to the synthesis of either ATP or GTP and thus represents the only step of substrate-level phosphorylation in the TCA. The beta subunit provides nucleotide specificity of the enzyme and binds the substrate succinate, while the binding sites for coenzyme A and phosphate are found in the alpha subunit. This is Succinate--CoA ligase [ADP-forming] subunit beta from Mycobacterium leprae (strain Br4923).